The chain runs to 103 residues: L-rhamnose mutarotase (103 aa).

Tyr18 is a substrate binding site. The active-site Proton donor is the His22. Substrate is bound by residues Tyr41 and 76-77 (WW).

The protein belongs to the rhamnose mutarotase family. As to quaternary structure, homodimer.

Its subcellular location is the cytoplasm. The enzyme catalyses alpha-L-rhamnose = beta-L-rhamnose. It functions in the pathway carbohydrate metabolism; L-rhamnose metabolism. Its function is as follows. Involved in the anomeric conversion of L-rhamnose. The polypeptide is L-rhamnose mutarotase (Enterococcus faecalis (strain ATCC 700802 / V583)).